We begin with the raw amino-acid sequence, 443 residues long: Carbohydrate sulfotransferase 9 (443 aa).

The Cytoplasmic segment spans residues 1 to 12 (MQPSEMVMNPKQ). Residues 13–33 (VFLSVLIFGVAGLLLFMYLQV) form a helical; Signal-anchor for type II membrane protein membrane-spanning segment. At 34-443 (WIEEQHTGRV…LMFNYTTPFL (410 aa)) the chain is on the lumenal side. Over residues 108–128 (LTKTSHSQGGDQALSKSTGSP) the composition is skewed to polar residues. A disordered region spans residues 108–132 (LTKTSHSQGGDQALSKSTGSPTEKL). N-linked (GlcNAc...) asparagine glycosylation occurs at N159. 220–226 (PKAGCSN) contributes to the 3'-phosphoadenylyl sulfate binding site. N-linked (GlcNAc...) asparagine glycosylation is present at N243. Position 280–288 (280–288 (RDPMERLVS)) interacts with 3'-phosphoadenylyl sulfate. 2 N-linked (GlcNAc...) asparagine glycosylation sites follow: N324 and N437.

The protein belongs to the sulfotransferase 2 family. In terms of tissue distribution, highly expressed in trachea. Also expressed in fetal lung, adult pancreas, testis and salivary gland. Expressed at low level in pituitary gland, apex of the heart, adult lung, prostate and mammary gland. Weakly or not expressed in heart, liver and spinal cord.

The protein resides in the golgi apparatus membrane. Its subcellular location is the secreted. Its function is as follows. Catalyzes the transfer of sulfate to position 4 of non-reducing N-acetylgalactosamine (GalNAc) residues in both N-glycans and O-glycans. Participates in biosynthesis of glycoprotein hormones lutropin and thyrotropin, by mediating sulfation of their carbohydrate structures. Has a higher activity toward carbonic anhydrase VI than toward lutropin. Only active against terminal GalNAcbeta1,GalNAcbeta. Isoform 2, but not isoform 1, is active toward chondroitin. The chain is Carbohydrate sulfotransferase 9 (CHST9) from Homo sapiens (Human).